The sequence spans 284 residues: 2-dehydro-3-deoxyphosphooctonate aldolase (284 aa).

The protein belongs to the KdsA family.

It is found in the cytoplasm. It catalyses the reaction D-arabinose 5-phosphate + phosphoenolpyruvate + H2O = 3-deoxy-alpha-D-manno-2-octulosonate-8-phosphate + phosphate. Its pathway is carbohydrate biosynthesis; 3-deoxy-D-manno-octulosonate biosynthesis; 3-deoxy-D-manno-octulosonate from D-ribulose 5-phosphate: step 2/3. It participates in bacterial outer membrane biogenesis; lipopolysaccharide biosynthesis. In Actinobacillus pleuropneumoniae serotype 7 (strain AP76), this protein is 2-dehydro-3-deoxyphosphooctonate aldolase.